Consider the following 155-residue polypeptide: 2-C-methyl-D-erythritol 2,4-cyclodiphosphate synthase (155 aa).

A divalent metal cation is bound by residues Asp-10, His-12, and His-46. 10 to 12 (DSH) serves as a coordination point for 4-CDP-2-C-methyl-D-erythritol 2-phosphate. Residues 60–62 (DIG), 65–69 (FDEND), and Lys-140 contribute to the 4-CDP-2-C-methyl-D-erythritol 2-phosphate site.

It belongs to the IspF family. Homotrimer. A divalent metal cation serves as cofactor.

It catalyses the reaction 4-CDP-2-C-methyl-D-erythritol 2-phosphate = 2-C-methyl-D-erythritol 2,4-cyclic diphosphate + CMP. Its pathway is isoprenoid biosynthesis; isopentenyl diphosphate biosynthesis via DXP pathway; isopentenyl diphosphate from 1-deoxy-D-xylulose 5-phosphate: step 4/6. In terms of biological role, involved in the biosynthesis of isopentenyl diphosphate (IPP) and dimethylallyl diphosphate (DMAPP), two major building blocks of isoprenoid compounds. Catalyzes the conversion of 4-diphosphocytidyl-2-C-methyl-D-erythritol 2-phosphate (CDP-ME2P) to 2-C-methyl-D-erythritol 2,4-cyclodiphosphate (ME-CPP) with a corresponding release of cytidine 5-monophosphate (CMP). The chain is 2-C-methyl-D-erythritol 2,4-cyclodiphosphate synthase from Mycoplasmoides gallisepticum (strain R(low / passage 15 / clone 2)) (Mycoplasma gallisepticum).